Reading from the N-terminus, the 280-residue chain is Probable N-acetyltransferase 14 (280 aa).

2 consecutive transmembrane segments (helical) span residues 37-57 and 60-80; these read LILH…LSSI and CVLH…VIYL. Residues 111–152 form a disordered region; it reads PDLPNPHLGRAKLTTNQEKTRRRKKAKEKEKMNESEQVDEDE. Residues 116–273 form the N-acetyltransferase domain; it reads PHLGRAKLTT…EKGWLGYPLT (158 aa).

This sequence belongs to the camello family.

The protein localises to the membrane. In terms of biological role, probable acetyltransferase. The chain is Probable N-acetyltransferase 14 (nat14) from Danio rerio (Zebrafish).